We begin with the raw amino-acid sequence, 717 residues long: Probable metal-nicotianamine transporter YSL12 (717 aa).

The segment at 1–56 (MASHANASGGGGDEEMVEASTLRHRHGAGKDANGVGTERQLAAAAAEGEEEGPSSV) is disordered. A run of 14 helical transmembrane segments spans residues 76–96 (AFVVSFFLSIMFSIIVMKLNL), 99–119 (GIIPSLNVSAGLLGFFFVRLW), 144–164 (CVVAAYGIAFSGGFGTYLFGM), 186–206 (IGWMIGFLFLVSFIGLLALVP), 248–268 (LGKFFLFSFVWGFFQWFYTAG), 306–326 (IVNVSVLLGGILSWGIMWPLI), 351–371 (VFISIALILGDGLYNFVKVLI), 422–442 (VAFGGYVAVAAVSIGTLPQIF), 450–470 (ILVAYVFAPVLAFCNAYGAGL), 482–502 (LAIFIFGAWAGASNGGVLVGL), 536–556 (FVSQVIGTAMGCVIAPCVFWL), 593–613 (LPKHCLTLCYIFFAAAIAINL), 636–656 (FYIGSYFAIDMFIGTVILFVW), and 671–691 (VASGLICGDGIWTLPQSILAL).

It belongs to the YSL (TC 2.A.67.2) family. As to expression, expressed in root cortex and stele.

Its subcellular location is the membrane. Its function is as follows. May be involved in the transport of nicotianamine-chelated metals. The protein is Probable metal-nicotianamine transporter YSL12 (YSL12) of Oryza sativa subsp. japonica (Rice).